The sequence spans 118 residues: Large ribosomal subunit protein bL20 (118 aa).

This sequence belongs to the bacterial ribosomal protein bL20 family.

Its function is as follows. Binds directly to 23S ribosomal RNA and is necessary for the in vitro assembly process of the 50S ribosomal subunit. It is not involved in the protein synthesizing functions of that subunit. This Clostridioides difficile (strain 630) (Peptoclostridium difficile) protein is Large ribosomal subunit protein bL20.